A 138-amino-acid polypeptide reads, in one-letter code: DNA-directed RNA polymerase subunit omega (138 aa).

The segment at 117 to 138 is disordered; that stretch reads NLLGRDNFFSTPENRNTSNTDS. The segment covering 124 to 138 has biased composition (polar residues); sequence FFSTPENRNTSNTDS.

Belongs to the RNA polymerase subunit omega family. As to quaternary structure, the RNAP catalytic core consists of 2 alpha, 1 beta, 1 beta' and 1 omega subunit. When a sigma factor is associated with the core the holoenzyme is formed, which can initiate transcription.

It carries out the reaction RNA(n) + a ribonucleoside 5'-triphosphate = RNA(n+1) + diphosphate. Its function is as follows. Promotes RNA polymerase assembly. Latches the N- and C-terminal regions of the beta' subunit thereby facilitating its interaction with the beta and alpha subunits. The polypeptide is DNA-directed RNA polymerase subunit omega (Ehrlichia canis (strain Jake)).